A 773-amino-acid polypeptide reads, in one-letter code: Mitogen-activated protein kinase kinase kinase 9 (773 aa).

Residues 1–14 (MKKSSDKSPVRQHD) are compositionally biased toward basic and acidic residues. Residues 1–35 (MKKSSDKSPVRQHDTATQINSDAVSSSTSFTDSDS) form a disordered region. The span at 21–35 (SDAVSSSTSFTDSDS) shows a compositional bias: low complexity. S79 and S150 each carry phosphoserine. Residues 100-493 (FDKILALMKK…VSNTSPICVS (394 aa)) are regulatory region. S365 carries the phosphoserine; by MAPK4 modification. A disordered region spans residues 426–455 (EIVRRPSSSSSSENGCDEEEAEDDKVEKEE). The segment covering 440–449 (GCDEEEAEDD) has biased composition (acidic residues). Residues 501-755 (WQKGQLLRQG…ATELLNHPFV (255 aa)) form the Protein kinase domain. Residues 507–515 (LRQGSFGSV) and K529 each bind ATP. D624 acts as the Proton acceptor in catalysis. Residue S768 is modified to Phosphoserine.

It belongs to the protein kinase superfamily. STE Ser/Thr protein kinase family. MAP kinase kinase kinase subfamily. As to quaternary structure, interacts with MPK4. Post-translationally, phosphorylated by MPK4 upon treatment with flg22. In terms of tissue distribution, expressed at least in rosette leaves (at protein level).

The enzyme catalyses L-seryl-[protein] + ATP = O-phospho-L-seryl-[protein] + ADP + H(+). It carries out the reaction L-threonyl-[protein] + ATP = O-phospho-L-threonyl-[protein] + ADP + H(+). In terms of biological role, triggers SUMM2-mediated immune responses, including cell death and defense responses. Probably inhibited by the MEKK1-MKK1/ MKK2-MPK4 kinase cascade to adjust plant defense. Seems to contribute in transducing external glutamate (L-Glu) signal that elicits large-scale changes in root architecture. The sequence is that of Mitogen-activated protein kinase kinase kinase 9 from Arabidopsis thaliana (Mouse-ear cress).